We begin with the raw amino-acid sequence, 191 residues long: ATP-dependent dethiobiotin synthetase BioD 2 (191 aa).

13-18 (DVGKTI) serves as a coordination point for ATP. Thr-17 serves as a coordination point for Mg(2+). Residue Lys-38 is part of the active site. Residue Thr-42 participates in substrate binding. Residues Asp-50 and 115-118 (EGAG) contribute to the ATP site. Positions 50 and 115 each coordinate Mg(2+).

It belongs to the dethiobiotin synthetase family. In terms of assembly, homodimer. Mg(2+) is required as a cofactor.

Its subcellular location is the cytoplasm. It carries out the reaction (7R,8S)-7,8-diammoniononanoate + CO2 + ATP = (4R,5S)-dethiobiotin + ADP + phosphate + 3 H(+). It participates in cofactor biosynthesis; biotin biosynthesis; biotin from 7,8-diaminononanoate: step 1/2. Functionally, catalyzes a mechanistically unusual reaction, the ATP-dependent insertion of CO2 between the N7 and N8 nitrogen atoms of 7,8-diaminopelargonic acid (DAPA, also called 7,8-diammoniononanoate) to form a ureido ring. The sequence is that of ATP-dependent dethiobiotin synthetase BioD 2 from Haemophilus influenzae (strain ATCC 51907 / DSM 11121 / KW20 / Rd).